A 180-amino-acid polypeptide reads, in one-letter code: Translation initiation factor IF-3 (180 aa).

It belongs to the IF-3 family. As to quaternary structure, monomer.

It localises to the cytoplasm. Its function is as follows. IF-3 binds to the 30S ribosomal subunit and shifts the equilibrium between 70S ribosomes and their 50S and 30S subunits in favor of the free subunits, thus enhancing the availability of 30S subunits on which protein synthesis initiation begins. The sequence is that of Translation initiation factor IF-3 from Mesoplasma florum (strain ATCC 33453 / NBRC 100688 / NCTC 11704 / L1) (Acholeplasma florum).